A 436-amino-acid chain; its full sequence is Chaperone SurA (436 aa).

Residues 1–30 form the signal peptide; that stretch reads MKFFQRPERRLKQWGLALLLAASALLPARA. 2 consecutive PpiC domains span residues 180–281 and 291–389; these read ETEY…KLVD and VTQT…QVLE.

It is found in the periplasm. The enzyme catalyses [protein]-peptidylproline (omega=180) = [protein]-peptidylproline (omega=0). Its function is as follows. Chaperone involved in the correct folding and assembly of outer membrane proteins. Recognizes specific patterns of aromatic residues and the orientation of their side chains, which are found more frequently in integral outer membrane proteins. May act in both early periplasmic and late outer membrane-associated steps of protein maturation. In Thiobacillus denitrificans (strain ATCC 25259 / T1), this protein is Chaperone SurA.